Here is a 105-residue protein sequence, read N- to C-terminus: Small ribosomal subunit protein uS10 (105 aa).

The protein belongs to the universal ribosomal protein uS10 family. As to quaternary structure, part of the 30S ribosomal subunit.

Functionally, involved in the binding of tRNA to the ribosomes. This is Small ribosomal subunit protein uS10 from Aster yellows witches'-broom phytoplasma (strain AYWB).